Here is a 126-residue protein sequence, read N- to C-terminus: Small ribosomal subunit protein uS12 (126 aa).

Residues 1 to 29 (MPTIQQLIRQPRAPKKRRSKSPALQKCPQ) are disordered. Aspartate 89 bears the 3-methylthioaspartic acid mark.

Belongs to the universal ribosomal protein uS12 family. As to quaternary structure, part of the 30S ribosomal subunit. Contacts proteins S8 and S17. May interact with IF1 in the 30S initiation complex.

In terms of biological role, with S4 and S5 plays an important role in translational accuracy. Functionally, interacts with and stabilizes bases of the 16S rRNA that are involved in tRNA selection in the A site and with the mRNA backbone. Located at the interface of the 30S and 50S subunits, it traverses the body of the 30S subunit contacting proteins on the other side and probably holding the rRNA structure together. The combined cluster of proteins S8, S12 and S17 appears to hold together the shoulder and platform of the 30S subunit. This Protochlamydia amoebophila (strain UWE25) protein is Small ribosomal subunit protein uS12.